Here is a 433-residue protein sequence, read N- to C-terminus: AP-2 complex subunit mu (433 aa).

Positions 168–432 (RNELFLDVLE…IGRSGIYETR (265 aa)) constitute an MHD domain. A 1,2-diacyl-sn-glycero-3-phospho-(1D-myo-inositol-3,4,5-trisphosphate) is bound by residues Lys-339, Lys-343, and Lys-352.

It belongs to the adaptor complexes medium subunit family. Adaptor protein complex 2 (AP-2) is a heterotetramer composed of two large adaptins (alpha-type subunit and beta-type subunit), a medium adaptin (mu-type subunit) and a small adaptin (sigma-type subunit).

The protein resides in the cell membrane. It is found in the membrane. It localises to the coated pit. Component of the adaptor complexes which link clathrin to receptors in coated vesicles. Clathrin-associated protein complexes are believed to interact with the cytoplasmic tails of membrane proteins, leading to their selection and concentration. AP50 is a subunit of the plasma membrane adaptor. The complex binds polyphosphoinositide-containing lipids. This chain is AP-2 complex subunit mu (AP2M1), found in Gallus gallus (Chicken).